A 332-amino-acid polypeptide reads, in one-letter code: Homoserine kinase (332 aa).

Belongs to the pseudomonas-type ThrB family.

The enzyme catalyses L-homoserine + ATP = O-phospho-L-homoserine + ADP + H(+). Its pathway is amino-acid biosynthesis; L-threonine biosynthesis; L-threonine from L-aspartate: step 4/5. The chain is Homoserine kinase from Burkholderia multivorans (strain ATCC 17616 / 249).